The sequence spans 230 residues: MPPHLIDGQPHQHIDRPRRVRQPGEPLRIGIGGPVGSGKTALVAALCRTLRDEISVAVLTNDIYTTEDADFLRRHAVLPDERITAVQTGGCPHTAIRDDITANLDAIEDLIATNEPLDLILVESGGDNLTATFSSGLIDVQIFVIDVAGGDKVPRKGGPGVTFSDLLVINKTDLAPMVGADLTVMARDAAAVREGRPTAMISLTEDPAASEVLAWVRAHLTEAHQTDHAH.

GTP is bound at residue 33–40; sequence GPVGSGKT.

Belongs to the SIMIBI class G3E GTPase family. UreG subfamily. Homodimer. UreD, UreF and UreG form a complex that acts as a GTP-hydrolysis-dependent molecular chaperone, activating the urease apoprotein by helping to assemble the nickel containing metallocenter of UreC. The UreE protein probably delivers the nickel.

It is found in the cytoplasm. Functionally, facilitates the functional incorporation of the urease nickel metallocenter. This process requires GTP hydrolysis, probably effectuated by UreG. This chain is Urease accessory protein UreG, found in Mycobacteroides abscessus (strain ATCC 19977 / DSM 44196 / CCUG 20993 / CIP 104536 / JCM 13569 / NCTC 13031 / TMC 1543 / L948) (Mycobacterium abscessus).